The following is a 186-amino-acid chain: MDRYFFLQDASTVAKLLLGNLLIRKIDKKEIVVRIVETEAYMGITDSACHSYSGKRTNRTNAMYNIGGYSYVYIIYGMHHMFNIVTADKNNPQAVLIRSVEPVSPLLGEKCVLTNGPGKLTKFLNIDLAFNKVDLIGNNELFLQRGLNLDFNIVCSKRININYAQEDDINKLWRFYIEGNKFVSRC.

Belongs to the DNA glycosylase MPG family.

The chain is Putative 3-methyladenine DNA glycosylase from Borreliella afzelii (strain PKo) (Borrelia afzelii).